Reading from the N-terminus, the 207-residue chain is Large ribosomal subunit protein uL3 (207 aa).

Residues 113-148 (KGKGFQGPIKRHGQSRGPMAHGSRYHRRPGSMGPVA) form a disordered region.

The protein belongs to the universal ribosomal protein uL3 family. In terms of assembly, part of the 50S ribosomal subunit. Forms a cluster with proteins L14 and L19.

One of the primary rRNA binding proteins, it binds directly near the 3'-end of the 23S rRNA, where it nucleates assembly of the 50S subunit. This chain is Large ribosomal subunit protein uL3, found in Lactococcus lactis subsp. lactis (strain IL1403) (Streptococcus lactis).